Here is a 209-residue protein sequence, read N- to C-terminus: PRA1 family protein B1 (209 aa).

Position 2 is an N-acetylalanine (Ala-2). A run of 5 helical transmembrane segments spans residues 73 to 93 (LAYFKVNYVAIVSLVLAFSLF), 95 to 115 (HPLSLLVLIGLLGGWMFLYLF), 133 to 153 (ETLLALVLSTIVVVFMTSVGS), 154 to 174 (LLTSALMIGVAIVCVHGAFVV), and 185 to 205 (PANAGLLSFLGGSATSAAAAV).

It belongs to the PRA1 family. Can form homodimer. Interacts with PRA1B2, PRA1B3, PRA1B4, PRA1B5, PRA1B6 and PRA1E.

It is found in the endosome membrane. Functionally, may be involved in both secretory and endocytic intracellular trafficking in the endosomal/prevacuolar compartments. The chain is PRA1 family protein B1 (PRA1B1) from Arabidopsis thaliana (Mouse-ear cress).